Reading from the N-terminus, the 206-residue chain is Molybdopterin synthase catalytic subunit (206 aa).

Polar residues predominate over residues 1–23 (MATQQPTQTDNSAQAQPPQTNPA). The disordered stretch occupies residues 1–27 (MATQQPTQTDNSAQAQPPQTNPAKPTE). Substrate-binding positions include 131–132 (HR), Lys147, and 154–156 (KRE). Basic and acidic residues predominate over residues 177–188 (KVDEPRIGKGEV). The disordered stretch occupies residues 177 to 206 (KVDEPRIGKGEVDEKEDEGDSGNGGNDRKS). Positions 197–206 (SGNGGNDRKS) are enriched in gly residues.

This sequence belongs to the MoaE family. MOCS2B subfamily. As to quaternary structure, heterotetramer; composed of 2 small (MOCS2A) and 2 large (MOCS2B) subunits.

It is found in the cytoplasm. It carries out the reaction 2 [molybdopterin-synthase sulfur-carrier protein]-C-terminal-Gly-aminoethanethioate + cyclic pyranopterin phosphate + H2O = molybdopterin + 2 [molybdopterin-synthase sulfur-carrier protein]-C-terminal Gly-Gly + 2 H(+). It participates in cofactor biosynthesis; molybdopterin biosynthesis. Catalytic subunit of the molybdopterin synthase complex, a complex that catalyzes the conversion of precursor Z into molybdopterin. Acts by mediating the incorporation of 2 sulfur atoms from thiocarboxylated MOCS2A into precursor Z to generate a dithiolene group. This Neurospora crassa (strain ATCC 24698 / 74-OR23-1A / CBS 708.71 / DSM 1257 / FGSC 987) protein is Molybdopterin synthase catalytic subunit (nit-8).